We begin with the raw amino-acid sequence, 86 residues long: Anti-adapter protein IraP (86 aa).

The stretch at 1-36 (MKNLIAELLFKLAQKEEESKELCAQVEALEIIVTAM) forms a coiled coil.

The protein belongs to the IraP family. As to quaternary structure, interacts with RssB.

The protein resides in the cytoplasm. Functionally, inhibits RpoS proteolysis by regulating RssB activity, thereby increasing the stability of the sigma stress factor RpoS especially during phosphate starvation, but also in stationary phase and during nitrogen starvation. Its effect on RpoS stability is due to its interaction with RssB, which probably blocks the interaction of RssB with RpoS, and the consequent delivery of the RssB-RpoS complex to the ClpXP protein degradation pathway. This is Anti-adapter protein IraP from Shigella sonnei (strain Ss046).